Consider the following 137-residue polypeptide: Putative pumilio homolog 25 (137 aa).

2 Pumilio repeats span residues 70-105 (EFDSYFENLVKDRVGNYVVQRLIWGFKRTGIDLPHS) and 108-137 (SVLVTRSIHLCKHRYGYQVIEAFDRSTRLA).

The protein localises to the cytoplasm. Its function is as follows. Sequence-specific RNA-binding protein that regulates translation and mRNA stability by binding the 3'-UTR of target mRNAs. This chain is Putative pumilio homolog 25 (APUM25), found in Arabidopsis thaliana (Mouse-ear cress).